The sequence spans 208 residues: Uracil phosphoribosyltransferase (208 aa).

5-phospho-alpha-D-ribose 1-diphosphate is bound by residues R78, R103, and 130-138 (DPMLATGGS). Residues I193 and 198–200 (GDA) each bind uracil. A 5-phospho-alpha-D-ribose 1-diphosphate-binding site is contributed by D199.

It belongs to the UPRTase family. The cofactor is Mg(2+).

The enzyme catalyses UMP + diphosphate = 5-phospho-alpha-D-ribose 1-diphosphate + uracil. It participates in pyrimidine metabolism; UMP biosynthesis via salvage pathway; UMP from uracil: step 1/1. Allosterically activated by GTP. Catalyzes the conversion of uracil and 5-phospho-alpha-D-ribose 1-diphosphate (PRPP) to UMP and diphosphate. The polypeptide is Uracil phosphoribosyltransferase (Desulfovibrio desulfuricans (strain ATCC 27774 / DSM 6949 / MB)).